The sequence spans 482 residues: UDP-N-acetylmuramate--L-alanine ligase (482 aa).

Residues 1 to 26 (MPQLPMTDSAPLPTPAPSSPAQPSAQ) form a disordered region. Residue 140–146 (GTHGKTT) participates in ATP binding.

This sequence belongs to the MurCDEF family.

It is found in the cytoplasm. The catalysed reaction is UDP-N-acetyl-alpha-D-muramate + L-alanine + ATP = UDP-N-acetyl-alpha-D-muramoyl-L-alanine + ADP + phosphate + H(+). The protein operates within cell wall biogenesis; peptidoglycan biosynthesis. Its function is as follows. Cell wall formation. The polypeptide is UDP-N-acetylmuramate--L-alanine ligase (Deinococcus radiodurans (strain ATCC 13939 / DSM 20539 / JCM 16871 / CCUG 27074 / LMG 4051 / NBRC 15346 / NCIMB 9279 / VKM B-1422 / R1)).